A 115-amino-acid chain; its full sequence is Peptidyl-tRNA hydrolase (115 aa).

This sequence belongs to the PTH2 family.

The protein resides in the cytoplasm. It catalyses the reaction an N-acyl-L-alpha-aminoacyl-tRNA + H2O = an N-acyl-L-amino acid + a tRNA + H(+). Functionally, the natural substrate for this enzyme may be peptidyl-tRNAs which drop off the ribosome during protein synthesis. This is Peptidyl-tRNA hydrolase from Methanocaldococcus jannaschii (strain ATCC 43067 / DSM 2661 / JAL-1 / JCM 10045 / NBRC 100440) (Methanococcus jannaschii).